The chain runs to 249 residues: 5'-nucleotidase SurE (249 aa).

Positions 9, 10, 40, and 92 each coordinate a divalent metal cation.

This sequence belongs to the SurE nucleotidase family. The cofactor is a divalent metal cation.

It is found in the cytoplasm. It catalyses the reaction a ribonucleoside 5'-phosphate + H2O = a ribonucleoside + phosphate. Nucleotidase that shows phosphatase activity on nucleoside 5'-monophosphates. This Shewanella baltica (strain OS223) protein is 5'-nucleotidase SurE.